The primary structure comprises 245 residues: 1-(5-phosphoribosyl)-5-[(5-phosphoribosylamino)methylideneamino] imidazole-4-carboxamide isomerase (245 aa).

Asp8 functions as the Proton acceptor in the catalytic mechanism. Asp129 acts as the Proton donor in catalysis.

This sequence belongs to the HisA/HisF family.

The protein resides in the cytoplasm. It catalyses the reaction 1-(5-phospho-beta-D-ribosyl)-5-[(5-phospho-beta-D-ribosylamino)methylideneamino]imidazole-4-carboxamide = 5-[(5-phospho-1-deoxy-D-ribulos-1-ylimino)methylamino]-1-(5-phospho-beta-D-ribosyl)imidazole-4-carboxamide. It participates in amino-acid biosynthesis; L-histidine biosynthesis; L-histidine from 5-phospho-alpha-D-ribose 1-diphosphate: step 4/9. This is 1-(5-phosphoribosyl)-5-[(5-phosphoribosylamino)methylideneamino] imidazole-4-carboxamide isomerase from Rhodopseudomonas palustris (strain BisB18).